A 746-amino-acid chain; its full sequence is Exostosin-1 (746 aa).

Over 1 to 7 (MQAKKRY) the chain is Cytoplasmic. The helical; Signal-anchor for type II membrane protein transmembrane segment at 8–28 (FILLSAGSCLALLFYFGGLQF) threads the bilayer. At 29–746 (RASRSHSRRE…RKKYRDIERL (718 aa)) the chain is on the lumenal side. N-linked (GlcNAc...) asparagine glycosylation occurs at N89. 2 disulfide bridges follow: C98–C103 and C109–C152. Residues L166 and Y203 each contribute to the a protein site. Residues K267, K269, Y271, and R280 each contribute to the UDP site. C298 and C312 are joined by a disulfide. Residue H300 coordinates a protein. The UDP site is built by Y319 and Y324. Residue N330 is glycosylated (N-linked (GlcNAc...) asparagine). Disulfide bonds link C334/C355 and C652/C704. R346 and E349 together coordinate UDP.

It belongs to the glycosyltransferase 47 family. Part of the heparan sulfate polymerase, a dimeric complex composed of EXT1 and EXT2. Could also form homooligomeric complexes. Interacts with NDST1. Post-translationally, N-glycosylated.

Its subcellular location is the golgi apparatus membrane. The protein localises to the golgi apparatus. It localises to the cis-Golgi network membrane. It is found in the endoplasmic reticulum membrane. The catalysed reaction is 3-O-{alpha-D-GlcNAc-[(1-&gt;4)-beta-D-GlcA-(1-&gt;4)-alpha-D-GlcNAc](n)-(1-&gt;4)-beta-D-GlcA-(1-&gt;3)-beta-D-Gal-(1-&gt;3)-beta-D-Gal-(1-&gt;4)-beta-D-Xyl}-L-seryl-[protein] + UDP-alpha-D-glucuronate = 3-O-{[(1-&gt;4)-beta-D-GlcA-(1-&gt;4)-alpha-D-GlcNAc](n+1)-(1-&gt;4)-beta-D-GlcA-(1-&gt;3)-beta-D-Gal-(1-&gt;3)-beta-D-Gal-(1-&gt;4)-beta-D-Xyl}-L-seryl-[protein] + UDP + H(+). Its pathway is protein modification; protein glycosylation. In terms of biological role, glycosyltransferase forming with EXT2 the heterodimeric heparan sulfate polymerase which catalyzes the elongation of the heparan sulfate glycan backbone. Glycan backbone extension consists in the alternating transfer of (1-&gt;4)-beta-D-GlcA and (1-&gt;4)-alpha-D-GlcNAc residues from their respective UDP-sugar donors. Both EXT1 and EXT2 are required for the full activity of the polymerase since EXT1 bears the N-acetylglucosaminyl-proteoglycan 4-beta-glucuronosyltransferase activity within the complex while EXT2 carries the glucuronosyl-N-acetylglucosaminyl-proteoglycan 4-alpha-N-acetylglucosaminyltransferase activity. Heparan sulfate proteoglycans are ubiquitous components of the extracellular matrix and play an important role in tissue homeostasis and signaling. This Bos taurus (Bovine) protein is Exostosin-1 (EXT1).